The primary structure comprises 327 residues: MFDLLALTLAGQVPAEQQGENANLHWRWLTEGLLEMTPKPGYRQAVVLSAGIHGNETAPIELLNQLVKDLLNGDRPLAVRLLVVLGNPAAMRAGKRYLHSDMNRMFGGRYRDFDHSGETARAQQLEQVIAEFFADEGAARFHYDLHTAIRDSRLPRFGILPFQTRPYSAEMLALLDAADLDALVIHSAPGGTFSHFTSEHAGAASCTLELGKARPFGVNDLQQFAAINRALQAAVSGEPLPLRSGSELRIFRVERSLIKRSEEFRLHLSDDTANFTELKQGTLLCDQPGEEYRVQHVSEWILFPNPGVALGLRAGMVLVEAPRSTLY.

3 residues coordinate Zn(2+): His-53, Glu-56, and His-146. Glu-209 is a catalytic residue.

This sequence belongs to the AspA/AstE family. Succinylglutamate desuccinylase subfamily. Zn(2+) is required as a cofactor.

It carries out the reaction N-succinyl-L-glutamate + H2O = L-glutamate + succinate. Its pathway is amino-acid degradation; L-arginine degradation via AST pathway; L-glutamate and succinate from L-arginine: step 5/5. In terms of biological role, transforms N(2)-succinylglutamate into succinate and glutamate. The protein is Succinylglutamate desuccinylase of Serratia proteamaculans (strain 568).